A 196-amino-acid chain; its full sequence is Peptidyl-tRNA hydrolase (196 aa).

His-15 contributes to the tRNA binding site. Residue His-20 is the Proton acceptor of the active site. TRNA-binding residues include Tyr-66, Asn-68, and Asn-114.

The protein belongs to the PTH family. Monomer.

Its subcellular location is the cytoplasm. The enzyme catalyses an N-acyl-L-alpha-aminoacyl-tRNA + H2O = an N-acyl-L-amino acid + a tRNA + H(+). In terms of biological role, hydrolyzes ribosome-free peptidyl-tRNAs (with 1 or more amino acids incorporated), which drop off the ribosome during protein synthesis, or as a result of ribosome stalling. Functionally, catalyzes the release of premature peptidyl moieties from peptidyl-tRNA molecules trapped in stalled 50S ribosomal subunits, and thus maintains levels of free tRNAs and 50S ribosomes. The polypeptide is Peptidyl-tRNA hydrolase (Polynucleobacter asymbioticus (strain DSM 18221 / CIP 109841 / QLW-P1DMWA-1) (Polynucleobacter necessarius subsp. asymbioticus)).